The primary structure comprises 160 residues: Single-stranded DNA-binding protein 3 (160 aa).

The region spanning 2–104 (MNRVVLVGRL…IVAESVQFLE (103 aa)) is the SSB domain. The span at 106-133 (KQNGAGGSTSNNNQSETNYSNDNKTSSY) shows a compositional bias: polar residues. The disordered stretch occupies residues 106 to 160 (KQNGAGGSTSNNNQSETNYSNDNKTSSYRADRSQNGDSFANEGAPVDINPDDLPF).

Homotetramer.

This chain is Single-stranded DNA-binding protein 3 (ssb3), found in Listeria innocua serovar 6a (strain ATCC BAA-680 / CLIP 11262).